Reading from the N-terminus, the 820-residue chain is Serine/threonine-protein phosphatase 4 regulatory subunit 3 (820 aa).

Positions 1 to 100 constitute a WH1 domain; sequence MSDTRRRVKV…DEIWEKICQV (100 aa). Disordered stretches follow at residues 687–711 and 750–820; these read EDEE…DFPE and AANG…RLGS. Positions 701–711 are enriched in basic and acidic residues; that stretch reads EKTKTEDDFPE. Over residues 750-761 the composition is skewed to polar residues; it reads AANGANSTNSKS. Residues 770 to 784 are compositionally biased toward low complexity; the sequence is SSNGSSSKNTSLTTT. Acidic residues predominate over residues 798–809; that stretch reads YPDDEDEEEEED.

It belongs to the SMEK family. In terms of assembly, serine/threonine-protein phosphatase 4 (PP4) occurs in different assemblies of the catalytic and one or more regulatory subunits.

Functionally, regulatory subunit of serine/threonine-protein phosphatase 4 (PP4). The chain is Serine/threonine-protein phosphatase 4 regulatory subunit 3 from Xenopus tropicalis (Western clawed frog).